A 1320-amino-acid polypeptide reads, in one-letter code: Centrosomin (1320 aa).

The tract at residues 20–41 is disordered; it reads ASFDVPRPPGGGNSPLPSQGRS. Residues 97–516 are a coiled coil; it reads RKTVDVKMEL…SSQEKEIKKL (420 aa). A compositionally biased stretch (basic and acidic residues) spans 517-530; that stretch reads NQENEQSANKENDC. The interval 517–554 is disordered; the sequence is NQENEQSANKENDCAKTVISPSSSGRSMSDNEASSQEM. Positions 535–554 are enriched in polar residues; that stretch reads ISPSSSGRSMSDNEASSQEM. S545 carries the post-translational modification Phosphoserine. Coiled-coil stretches lie at residues 626–654 and 712–983; these read EADLQQSFTEAEYMRALERNKLLQRKVDV and NSLL…LKLA. Positions 644-656 match the Nuclear localization signal motif; sequence RNKLLQRKVDVLF. T782 carries the post-translational modification Phosphothreonine. S785 is subject to Phosphoserine. Residues 810–823 are compositionally biased toward basic and acidic residues; the sequence is KKELEKRRSSEGQR. Disordered stretches follow at residues 810 to 849 and 863 to 893; these read KKELEKRRSSEGQRKERRSLPLPSQQFDNQSESEAWSEPD and SNSLAAPEQAISESESEGRTCATRQDRNRNS. Over residues 831–843 the composition is skewed to polar residues; the sequence is LPSQQFDNQSESE. Phosphoserine occurs at positions 874, 876, 878, 1191, 1234, 1237, and 1239. The segment at 1220-1249 is disordered; sequence VEMKTEGSASPKAKSEESTSPDSKSNVATG. Polar residues predominate over residues 1237 to 1247; sequence STSPDSKSNVA.

As to quaternary structure, monomer. Developing visceral mesoderm of the midgut, the central and peripheral nervous system, and developing gonads. Isoform J: Expressed in ovaries, testis and embryos. Isoform A: Expressed in testis only.

The protein localises to the cytoplasm. Its subcellular location is the cytoskeleton. The protein resides in the microtubule organizing center. It is found in the centrosome. It localises to the flagellum basal body. The protein localises to the perinuclear region. Functionally, core component of the centrosome throughout spermatogenesis. May participate in mitotic spindle assembly and the mechanics of morphogenesis through an interaction with microtubules, either directly or indirectly. Is a target of several homeotic genes. This Drosophila melanogaster (Fruit fly) protein is Centrosomin (cnn).